Reading from the N-terminus, the 286-residue chain is Translocon-associated protein subunit alpha (286 aa).

The first 18 residues, 1–18, serve as a signal peptide directing secretion; that stretch reads MRLLPRLLLLLLLVFPAT. The Lumenal portion of the chain corresponds to 19–207; sequence VLFRGGPRGL…EREDGLDGET (189 aa). Residues 39–75 show a composition bias toward acidic residues; that stretch reads EETVEDSIIEDEDDEAEVEEDEPTDLVEDKEEEDVSG. A disordered region spans residues 39–83; that stretch reads EETVEDSIIEDEDDEAEVEEDEPTDLVEDKEEEDVSGEPEASPSA. Asn-136 and Asn-191 each carry an N-linked (GlcNAc...) asparagine glycan. A helical membrane pass occupies residues 208 to 228; that stretch reads IFMYMFLAGLGLLVIVGLHQL. At 229–286 the chain is on the cytoplasmic side; the sequence is LESRKRKRPIQKVEMGTSSQNDVDMSWIPQETLNQINKASPRRLPRKRAQKRSVGSDE. A Phosphoserine modification is found at Ser-247. Thr-260 is subject to Phosphothreonine. Residues 261–286 form a disordered region; it reads LNQINKASPRRLPRKRAQKRSVGSDE. Ser-268 bears the Phosphoserine mark. Residues 268 to 279 are compositionally biased toward basic residues; that stretch reads SPRRLPRKRAQK.

This sequence belongs to the TRAP-alpha family. As to quaternary structure, heterotetramer of TRAP-alpha, TRAP-beta, TRAP-delta and TRAP-gamma. Interacts with palmitoylated calnexin (CALX), the interaction is required for efficient folding of glycosylated proteins.

Its subcellular location is the endoplasmic reticulum membrane. Its function is as follows. TRAP proteins are part of a complex whose function is to bind calcium to the ER membrane and thereby regulate the retention of ER resident proteins. May be involved in the recycling of the translocation apparatus after completion of the translocation process or may function as a membrane-bound chaperone facilitating folding of translocated proteins. The protein is Translocon-associated protein subunit alpha (SSR1) of Homo sapiens (Human).